We begin with the raw amino-acid sequence, 345 residues long: Aspartate--ammonia ligase (345 aa).

This sequence belongs to the class-II aminoacyl-tRNA synthetase family. AsnA subfamily.

The protein localises to the cytoplasm. The catalysed reaction is L-aspartate + NH4(+) + ATP = L-asparagine + AMP + diphosphate + H(+). It functions in the pathway amino-acid biosynthesis; L-asparagine biosynthesis; L-asparagine from L-aspartate (ammonia route): step 1/1. This chain is Aspartate--ammonia ligase, found in Parabacteroides distasonis (strain ATCC 8503 / DSM 20701 / CIP 104284 / JCM 5825 / NCTC 11152).